The sequence spans 241 residues: Phosducin-like protein 2 (241 aa).

The region spanning 34–202 (VLRLQKEAMV…EWKLAEVGAI (169 aa)) is the Phosducin domain. The segment at 89 to 241 (FGELREISGN…DSSNSDNDTK (153 aa)) is thioredoxin fold.

It belongs to the phosducin family. As to quaternary structure, interacts with the CCT chaperonin complex and actin. As to expression, testis-specific.

Its subcellular location is the endoplasmic reticulum. In terms of biological role, essential for male fertility, spermiogenesis and acrosome formation. The polypeptide is Phosducin-like protein 2 (PDCL2) (Homo sapiens (Human)).